The following is a 511-amino-acid chain: Maturase K (511 aa).

The protein belongs to the intron maturase 2 family. MatK subfamily.

It is found in the plastid. Its subcellular location is the chloroplast. Its function is as follows. Usually encoded in the trnK tRNA gene intron. Probably assists in splicing its own and other chloroplast group II introns. The protein is Maturase K of Hordeum vulgare subsp. spontaneum (Wild barley).